We begin with the raw amino-acid sequence, 201 residues long: Large ribosomal subunit protein uL4 (201 aa).

Residues 39–67 form a disordered region; sequence ARQGSRAQKTRSEVAGGGRKPWKQKGSGR.

It belongs to the universal ribosomal protein uL4 family. In terms of assembly, part of the 50S ribosomal subunit.

Its function is as follows. One of the primary rRNA binding proteins, this protein initially binds near the 5'-end of the 23S rRNA. It is important during the early stages of 50S assembly. It makes multiple contacts with different domains of the 23S rRNA in the assembled 50S subunit and ribosome. In terms of biological role, forms part of the polypeptide exit tunnel. The protein is Large ribosomal subunit protein uL4 of Marinomonas sp. (strain MWYL1).